Consider the following 126-residue polypeptide: Holo-[acyl-carrier-protein] synthase (126 aa).

Mg(2+) is bound by residues Asp-9 and Glu-58.

It belongs to the P-Pant transferase superfamily. AcpS family. Mg(2+) is required as a cofactor.

The protein localises to the cytoplasm. The enzyme catalyses apo-[ACP] + CoA = holo-[ACP] + adenosine 3',5'-bisphosphate + H(+). Transfers the 4'-phosphopantetheine moiety from coenzyme A to a Ser of acyl-carrier-protein. The protein is Holo-[acyl-carrier-protein] synthase of Klebsiella pneumoniae (strain 342).